The chain runs to 426 residues: MKQLRLEPINKVQGTINIPGSKSISNRALLLATLAKGTTTLTNLLDSDDIRYMLASLKQLGVNYRLSNDNTVCELEGIGAPLNSEQAQTLFLGNAGTAMRPLCAALTLGHGEFTLTGEPRMEERPIGDLVDALRQLGANVTYLKNDGFPPLTINATGLDAGEVEIAGDLSSQFLTALLMVAPLATGDVNIKIKGELVSKPYIDITIALMAQFGVQVVNHSYERFEIKAGQGYVSPGKVLVEGDASSASYFLAAGAIKGGEVKVTGVGRMSIQGDVKFADVLEKMGADIEWGDDYIISRGSTLKAVDLDMNHIPDAAMTIATAALFATGTTHIRNIYNWRIKETDRLAAMATELRKVGAIVDEGHDYISITPPTKPHTADIDTYNDHRMAMCFSMLAFADCGITINDPDCTSKTFPDYFNQFAALAQ.

Residues K22, S23, and R27 each contribute to the 3-phosphoshikimate site. K22 provides a ligand contact to phosphoenolpyruvate. 2 residues coordinate phosphoenolpyruvate: G96 and R124. S170, S171, Q172, S198, D314, N337, and K341 together coordinate 3-phosphoshikimate. A phosphoenolpyruvate-binding site is contributed by Q172. The Proton acceptor role is filled by D314. Phosphoenolpyruvate is bound by residues R345, R387, and K412.

The protein belongs to the EPSP synthase family. In terms of assembly, monomer.

Its subcellular location is the cytoplasm. The catalysed reaction is 3-phosphoshikimate + phosphoenolpyruvate = 5-O-(1-carboxyvinyl)-3-phosphoshikimate + phosphate. It participates in metabolic intermediate biosynthesis; chorismate biosynthesis; chorismate from D-erythrose 4-phosphate and phosphoenolpyruvate: step 6/7. Its function is as follows. Catalyzes the transfer of the enolpyruvyl moiety of phosphoenolpyruvate (PEP) to the 5-hydroxyl of shikimate-3-phosphate (S3P) to produce enolpyruvyl shikimate-3-phosphate and inorganic phosphate. This is 3-phosphoshikimate 1-carboxyvinyltransferase from Shewanella sediminis (strain HAW-EB3).